A 296-amino-acid polypeptide reads, in one-letter code: Formamidopyrimidine-DNA glycosylase (296 aa).

The active-site Schiff-base intermediate with DNA is proline 2. Glutamate 3 acts as the Proton donor in catalysis. Residue lysine 58 is the Proton donor; for beta-elimination activity of the active site. Histidine 104, arginine 126, and lysine 169 together coordinate DNA. The segment at 260-296 (SVYDRESQACRTPGCGGTVARIVQAGRSTFYCATCQK) adopts an FPG-type zinc-finger fold. Arginine 286 functions as the Proton donor; for delta-elimination activity in the catalytic mechanism.

The protein belongs to the FPG family. As to quaternary structure, monomer. It depends on Zn(2+) as a cofactor.

The catalysed reaction is Hydrolysis of DNA containing ring-opened 7-methylguanine residues, releasing 2,6-diamino-4-hydroxy-5-(N-methyl)formamidopyrimidine.. The enzyme catalyses 2'-deoxyribonucleotide-(2'-deoxyribose 5'-phosphate)-2'-deoxyribonucleotide-DNA = a 3'-end 2'-deoxyribonucleotide-(2,3-dehydro-2,3-deoxyribose 5'-phosphate)-DNA + a 5'-end 5'-phospho-2'-deoxyribonucleoside-DNA + H(+). In terms of biological role, involved in base excision repair of DNA damaged by oxidation or by mutagenic agents. Acts as a DNA glycosylase that recognizes and removes damaged bases. Has a preference for oxidized purines, such as 7,8-dihydro-8-oxoguanine (8-oxoG). Has AP (apurinic/apyrimidinic) lyase activity and introduces nicks in the DNA strand. Cleaves the DNA backbone by beta-delta elimination to generate a single-strand break at the site of the removed base with both 3'- and 5'-phosphates. The protein is Formamidopyrimidine-DNA glycosylase of Rhizobium johnstonii (strain DSM 114642 / LMG 32736 / 3841) (Rhizobium leguminosarum bv. viciae).